The sequence spans 433 residues: L-lysine 2,3-aminomutase (433 aa).

A Radical SAM core domain is found at 122–334; that stretch reads HRYPDRVLFY…SLIGHTTGFA (213 aa). [4Fe-4S] cluster is bound by residues Cys136, Cys140, and Cys143. Cys279 is a binding site for Zn(2+). At Lys348 the chain carries N6-(pyridoxal phosphate)lysine. Residues Cys389, Cys392, and Cys396 each contribute to the Zn(2+) site.

The protein belongs to the radical SAM superfamily. KamA family. Requires [4Fe-4S] cluster as cofactor. Pyridoxal 5'-phosphate is required as a cofactor. Zn(2+) serves as cofactor.

The catalysed reaction is L-lysine = (3S)-3,6-diaminohexanoate. Catalyzes the interconversion of L-alpha-lysine and L-beta-lysine. Is involved in the biosynthesis pathway of N6-acetyl-beta-lysine, a compatible solute produced by methanogenic archaea that helps cells to cope with salt stress. The chain is L-lysine 2,3-aminomutase (ablA) from Methanococcus maripaludis (strain DSM 14266 / JCM 13030 / NBRC 101832 / S2 / LL).